Consider the following 513-residue polypeptide: ATP synthase subunit alpha (513 aa).

ATP is bound at residue 169-176 (GDRQIGKT).

The protein belongs to the ATPase alpha/beta chains family. As to quaternary structure, F-type ATPases have 2 components, CF(1) - the catalytic core - and CF(0) - the membrane proton channel. CF(1) has five subunits: alpha(3), beta(3), gamma(1), delta(1), epsilon(1). CF(0) has three main subunits: a(1), b(2) and c(9-12). The alpha and beta chains form an alternating ring which encloses part of the gamma chain. CF(1) is attached to CF(0) by a central stalk formed by the gamma and epsilon chains, while a peripheral stalk is formed by the delta and b chains.

It is found in the cell inner membrane. It catalyses the reaction ATP + H2O + 4 H(+)(in) = ADP + phosphate + 5 H(+)(out). In terms of biological role, produces ATP from ADP in the presence of a proton gradient across the membrane. The alpha chain is a regulatory subunit. This is ATP synthase subunit alpha from Francisella tularensis subsp. tularensis (strain SCHU S4 / Schu 4).